A 151-amino-acid chain; its full sequence is Small heat shock protein HspD (151 aa).

The region spanning 28–138 (RATEDNYPPY…KPRRIAINGA (111 aa)) is the sHSP domain.

This sequence belongs to the small heat shock protein (HSP20) family.

This Bradyrhizobium diazoefficiens (strain JCM 10833 / BCRC 13528 / IAM 13628 / NBRC 14792 / USDA 110) protein is Small heat shock protein HspD (hspD).